The chain runs to 565 residues: NAD-dependent malic enzyme (565 aa).

Residue Tyr104 is the Proton donor of the active site. Arg157 contacts NAD(+). Lys175 (proton acceptor) is an active-site residue. Positions 246, 247, and 270 each coordinate a divalent metal cation. The NAD(+) site is built by Asp270 and Asn418.

Belongs to the malic enzymes family. In terms of assembly, homotetramer. Requires Mg(2+) as cofactor. Mn(2+) serves as cofactor.

It carries out the reaction (S)-malate + NAD(+) = pyruvate + CO2 + NADH. It catalyses the reaction oxaloacetate + H(+) = pyruvate + CO2. The chain is NAD-dependent malic enzyme from Escherichia coli O139:H28 (strain E24377A / ETEC).